A 647-amino-acid polypeptide reads, in one-letter code: Acetyl-coenzyme A synthetase (647 aa).

CoA is bound by residues 190–193 (RGGR) and T310. ATP-binding positions include 386–388 (GEP), 410–415 (DTWWQT), D499, and R514. Residue S522 coordinates CoA. Residue R525 coordinates ATP. The Mg(2+) site is built by V536, H538, and V541. R583 contributes to the CoA binding site. At K608 the chain carries N6-acetyllysine.

Belongs to the ATP-dependent AMP-binding enzyme family. The cofactor is Mg(2+). In terms of processing, acetylated. Deacetylation by the SIR2-homolog deacetylase activates the enzyme.

The enzyme catalyses acetate + ATP + CoA = acetyl-CoA + AMP + diphosphate. Functionally, catalyzes the conversion of acetate into acetyl-CoA (AcCoA), an essential intermediate at the junction of anabolic and catabolic pathways. AcsA undergoes a two-step reaction. In the first half reaction, AcsA combines acetate with ATP to form acetyl-adenylate (AcAMP) intermediate. In the second half reaction, it can then transfer the acetyl group from AcAMP to the sulfhydryl group of CoA, forming the product AcCoA. This Xylella fastidiosa (strain Temecula1 / ATCC 700964) protein is Acetyl-coenzyme A synthetase.